The primary structure comprises 158 residues: Cyclic pyranopterin monophosphate synthase (158 aa).

Substrate-binding positions include Leu75 to His77 and Met113 to Glu114. Asp128 is a catalytic residue.

Belongs to the MoaC family. Homohexamer; trimer of dimers.

It carries out the reaction (8S)-3',8-cyclo-7,8-dihydroguanosine 5'-triphosphate = cyclic pyranopterin phosphate + diphosphate. It participates in cofactor biosynthesis; molybdopterin biosynthesis. Functionally, catalyzes the conversion of (8S)-3',8-cyclo-7,8-dihydroguanosine 5'-triphosphate to cyclic pyranopterin monophosphate (cPMP). In Ralstonia pickettii (strain 12J), this protein is Cyclic pyranopterin monophosphate synthase.